The primary structure comprises 190 residues: Potassium-transporting ATPase KdpC subunit (190 aa).

The helical transmembrane segment at 10–30 (VLLLVLTGLTGFAYPLLSTAI) threads the bilayer.

It belongs to the KdpC family. The system is composed of three essential subunits: KdpA, KdpB and KdpC.

It is found in the cell inner membrane. Its function is as follows. Part of the high-affinity ATP-driven potassium transport (or Kdp) system, which catalyzes the hydrolysis of ATP coupled with the electrogenic transport of potassium into the cytoplasm. This subunit acts as a catalytic chaperone that increases the ATP-binding affinity of the ATP-hydrolyzing subunit KdpB by the formation of a transient KdpB/KdpC/ATP ternary complex. In Sorangium cellulosum (strain So ce56) (Polyangium cellulosum (strain So ce56)), this protein is Potassium-transporting ATPase KdpC subunit.